A 221-amino-acid chain; its full sequence is 7-cyano-7-deazaguanine synthase (221 aa).

8–18 (LSGGMDSAAVI) contributes to the ATP binding site. Residues C186, C196, C199, and C202 each contribute to the Zn(2+) site.

This sequence belongs to the QueC family. Zn(2+) serves as cofactor.

The enzyme catalyses 7-carboxy-7-deazaguanine + NH4(+) + ATP = 7-cyano-7-deazaguanine + ADP + phosphate + H2O + H(+). The protein operates within purine metabolism; 7-cyano-7-deazaguanine biosynthesis. Catalyzes the ATP-dependent conversion of 7-carboxy-7-deazaguanine (CDG) to 7-cyano-7-deazaguanine (preQ(0)). The protein is 7-cyano-7-deazaguanine synthase of Stenotrophomonas maltophilia (strain R551-3).